We begin with the raw amino-acid sequence, 520 residues long: Amine oxidase [flavin-containing] B (520 aa).

Residue Ser-2 is modified to N-acetylserine. The Cytoplasmic portion of the chain corresponds to 2–489 (SNKCDVIVVG…TFLERHLPSV (488 aa)). Position 52 is an N6-acetyllysine (Lys-52). Cys-397 is modified (S-8alpha-FAD cysteine). Residues 490 to 516 (PGLLKLLGLTTILSATALGFLAHKKGL) traverse the membrane as a helical; Anchor for type IV membrane protein segment. Over 517-520 (FVRF) the chain is Mitochondrial intermembrane.

This sequence belongs to the flavin monoamine oxidase family. In terms of assembly, monomer, homo- or heterodimer (containing two subunits of similar size). Each subunit contains a covalently bound flavin. Enzymatically active as monomer. Requires FAD as cofactor.

It is found in the mitochondrion outer membrane. The catalysed reaction is a secondary aliphatic amine + O2 + H2O = a primary amine + an aldehyde + H2O2. It catalyses the reaction (R)-adrenaline + O2 + H2O = (R)-3,4-dihydroxymandelaldehyde + methylamine + H2O2. It carries out the reaction a primary methyl amine + O2 + H2O = an aldehyde + H2O2 + NH4(+). The enzyme catalyses dopamine + O2 + H2O = 3,4-dihydroxyphenylacetaldehyde + H2O2 + NH4(+). The catalysed reaction is tyramine + O2 + H2O = (4-hydroxyphenyl)acetaldehyde + H2O2 + NH4(+). It catalyses the reaction (R)-noradrenaline + O2 + H2O = (R)-3,4-dihydroxymandelaldehyde + H2O2 + NH4(+). It carries out the reaction benzylamine + O2 + H2O = benzaldehyde + H2O2 + NH4(+). The enzyme catalyses 2-phenylethylamine + O2 + H2O = 2-phenylacetaldehyde + H2O2 + NH4(+). The catalysed reaction is N-acetylputrescine + O2 + H2O = 4-acetamidobutanal + H2O2 + NH4(+). In terms of biological role, catalyzes the oxidative deamination of primary and some secondary amines such as neurotransmitters, and exogenous amines including the tertiary amine, neurotoxin 1-methyl-4-phenyl-1,2,3,6-tetrahydropyridine (MPTP), with concomitant reduction of oxygen to hydrogen peroxide and participates in the metabolism of neuroactive and vasoactive amines in the central nervous system and peripheral tissues. Preferentially degrades benzylamine and phenylethylamine. The sequence is that of Amine oxidase [flavin-containing] B from Rattus norvegicus (Rat).